The primary structure comprises 301 residues: Uricase-2 isozyme 2 (301 aa).

Catalysis depends on charge relay system residues lysine 17 and threonine 63. Urate-binding residues include threonine 63, aspartate 64, phenylalanine 165, arginine 182, valine 237, glutamine 238, and asparagine 257. The active-site Charge relay system is histidine 259. The Microbody targeting signal signature appears at 299 to 301; sequence SKL.

The protein belongs to the uricase family.

Its subcellular location is the peroxisome. It catalyses the reaction urate + O2 + H2O = 5-hydroxyisourate + H2O2. It functions in the pathway purine metabolism; urate degradation; (S)-allantoin from urate: step 1/3. Functionally, catalyzes the oxidation of uric acid to 5-hydroxyisourate, which is further processed to form (S)-allantoin. The polypeptide is Uricase-2 isozyme 2 (Canavalia lineata (Beach bean)).